The chain runs to 1022 residues: MTLGESEKRYRISDIARELQLSPQEVLQFVKQQGVKVASTSSMVNEEVHGLIINQFSAEKKMVDETLKIRAEKEKRLTRLEEQSRKTLEKEQHLMEAISPTVRASKSSAKGSESAPKSEPKKSKQAVPAAAMVDDVPAAVVQQVVAEPEVVEPTPVVEVEAPALEPAIISEHVVDAEPIENAVTVAPVEVVVNEPIETVESVEPEFVVAEVTPLEPIAQSTIEIVAEGESVEVAEALHVAEPVVAIPPITETAELSDSTVEPIEPIASVPSTAPAPPARREPTVNENLVSFAAPQMMGGLTVVGTLDMHTGRGRKNRKKNFREQADALKGEFEVKAAAPVASENKTEAGVAKKSKPAAEVKPKPATTTAADDAKKAKKGKKKKKPDVDEKVISANIQKTISGIDDRSGTGSRQKFRKMRRSEREREQEEGAAQRELEQSIVRVTEFASPHELAELMGITAKDIIQKCFGLGKFVTINQRLDRESIELIALEFGFEAEFISEVEATAVETEADAEEDLQTRPPVVTIMGHVDHGKTSLLDYIRKSRVVAGESGGITQHIGAYEVTVDGDRKITFLDTPGHEAFTAMRARGAQVTDIVILVVAADDNVMPQTIEAINHAKAAGVPIVVALNKIDKSEANPDKIKTQLSEAGVLIEEWGGVYQCQEISAKKGIGIVELMEKVLTEAELRELKGNYSREVLASGVIVESELDKGKGVVSTVLVQRGVLKVGDPFVAGNSLGKVRALMDERGKRILLAFPSQPVRVLGFEDLPQSGDVLTVMASERDARDLAQKRQIIRREHDFRRSTRVKLDSIARQIREGVMKELNVIIKADTDGSIQALADGLMKIQNDEVKVQLIHQGVGQITETDVLLAAASDAIIIGFRVRPNVNAKKLAEKEDLDIRFYSVIYHVLEDVETALEGMLSPELHEESLGSIEIRQIFRVPKVGNVGGCYVLEGKVPRDAKVRLLRDGVQIYEGQLAALKRFKDDVKEVDSGYECGLSLKNYDDIKVGDVVEAYRIVEKKRKL.

The span at 82–94 (EQSRKTLEKEQHL) shows a compositional bias: basic and acidic residues. Disordered stretches follow at residues 82-129 (EQSR…AVPA) and 342-436 (SENK…QREL). A compositionally biased stretch (low complexity) spans 104 to 115 (ASKSSAKGSESA). Residues 375–384 (KAKKGKKKKK) show a composition bias toward basic residues. Basic and acidic residues predominate over residues 421–436 (SEREREQEEGAAQREL). A tr-type G domain is found at 519-689 (TRPPVVTIMG…LTEAELRELK (171 aa)). Positions 528-535 (GHVDHGKT) are G1. 528–535 (GHVDHGKT) serves as a coordination point for GTP. Positions 553-557 (GITQH) are G2. The segment at 575 to 578 (DTPG) is G3. Residues 575 to 579 (DTPGH) and 629 to 632 (NKID) contribute to the GTP site. The interval 629-632 (NKID) is G4. A G5 region spans residues 665 to 667 (SAK).

It belongs to the TRAFAC class translation factor GTPase superfamily. Classic translation factor GTPase family. IF-2 subfamily.

The protein resides in the cytoplasm. In terms of biological role, one of the essential components for the initiation of protein synthesis. Protects formylmethionyl-tRNA from spontaneous hydrolysis and promotes its binding to the 30S ribosomal subunits. Also involved in the hydrolysis of GTP during the formation of the 70S ribosomal complex. In Chlorobium chlorochromatii (strain CaD3), this protein is Translation initiation factor IF-2.